The following is a 655-amino-acid chain: tRNA-guanine(15) transglycosylase (655 aa).

Catalysis depends on Asp89, which acts as the Nucleophile. Positions 124 and 195 each coordinate substrate. Positions 281, 283, and 286 each coordinate Zn(2+). The PUA domain maps to 577–652; the sequence is KYRVVVNKEA…LAVKVRGGLK (76 aa).

The protein belongs to the archaeosine tRNA-ribosyltransferase family. It depends on Zn(2+) as a cofactor.

The enzyme catalyses guanosine(15) in tRNA + 7-cyano-7-deazaguanine = 7-cyano-7-carbaguanosine(15) in tRNA + guanine. The protein operates within tRNA modification; archaeosine-tRNA biosynthesis. In terms of biological role, exchanges the guanine residue with 7-cyano-7-deazaguanine (preQ0) at position 15 in the dihydrouridine loop (D-loop) of archaeal tRNAs. Can also utilize guanine as substrate. This chain is tRNA-guanine(15) transglycosylase, found in Methanocaldococcus jannaschii (strain ATCC 43067 / DSM 2661 / JAL-1 / JCM 10045 / NBRC 100440) (Methanococcus jannaschii).